A 1402-amino-acid chain; its full sequence is DNA-directed RNA polymerase subunit beta' (1402 aa).

The Zn(2+) site is built by Cys71, Cys73, Cys86, and Cys89. 3 residues coordinate Mg(2+): Asp462, Asp464, and Asp466. Positions 811, 885, 892, and 895 each coordinate Zn(2+).

This sequence belongs to the RNA polymerase beta' chain family. The RNAP catalytic core consists of 2 alpha, 1 beta, 1 beta' and 1 omega subunit. When a sigma factor is associated with the core the holoenzyme is formed, which can initiate transcription. It depends on Mg(2+) as a cofactor. Zn(2+) is required as a cofactor.

The catalysed reaction is RNA(n) + a ribonucleoside 5'-triphosphate = RNA(n+1) + diphosphate. In terms of biological role, DNA-dependent RNA polymerase catalyzes the transcription of DNA into RNA using the four ribonucleoside triphosphates as substrates. The chain is DNA-directed RNA polymerase subunit beta' from Rhizobium etli (strain ATCC 51251 / DSM 11541 / JCM 21823 / NBRC 15573 / CFN 42).